The chain runs to 556 residues: CTP synthase (556 aa).

An amidoligase domain region spans residues 1 to 266 (MKYIFVTGGV…GKVVEDLLGL (266 aa)). Residue serine 12 participates in CTP binding. Serine 12 contributes to the UTP binding site. Residue 13–18 (SLGKGV) participates in ATP binding. L-glutamine is bound at residue tyrosine 53. Residue aspartate 70 coordinates ATP. 2 residues coordinate Mg(2+): aspartate 70 and glutamate 140. CTP is bound by residues 147–149 (DIE), 187–192 (KTKPTQ), and lysine 223. Residues 187-192 (KTKPTQ) and lysine 223 contribute to the UTP site. The Glutamine amidotransferase type-1 domain occupies 291 to 544 (TIAIAGKYTE…VKAALRGQSS (254 aa)). Glycine 356 contributes to the L-glutamine binding site. Cysteine 383 acts as the Nucleophile; for glutamine hydrolysis in catalysis. L-glutamine is bound by residues 384 to 387 (LGMQ), glutamate 407, and arginine 467. Catalysis depends on residues histidine 517 and glutamate 519.

Belongs to the CTP synthase family. As to quaternary structure, homotetramer.

The enzyme catalyses UTP + L-glutamine + ATP + H2O = CTP + L-glutamate + ADP + phosphate + 2 H(+). The catalysed reaction is L-glutamine + H2O = L-glutamate + NH4(+). It catalyses the reaction UTP + NH4(+) + ATP = CTP + ADP + phosphate + 2 H(+). It functions in the pathway pyrimidine metabolism; CTP biosynthesis via de novo pathway; CTP from UDP: step 2/2. With respect to regulation, allosterically activated by GTP, when glutamine is the substrate; GTP has no effect on the reaction when ammonia is the substrate. The allosteric effector GTP functions by stabilizing the protein conformation that binds the tetrahedral intermediate(s) formed during glutamine hydrolysis. Inhibited by the product CTP, via allosteric rather than competitive inhibition. In terms of biological role, catalyzes the ATP-dependent amination of UTP to CTP with either L-glutamine or ammonia as the source of nitrogen. Regulates intracellular CTP levels through interactions with the four ribonucleotide triphosphates. This is CTP synthase from Deinococcus deserti (strain DSM 17065 / CIP 109153 / LMG 22923 / VCD115).